Consider the following 293-residue polypeptide: Bifunctional protein FolD (293 aa).

Residues 165 to 167, Ser190, and Ile231 contribute to the NADP(+) site; that span reads GRS.

The protein belongs to the tetrahydrofolate dehydrogenase/cyclohydrolase family. In terms of assembly, homodimer.

It catalyses the reaction (6R)-5,10-methylene-5,6,7,8-tetrahydrofolate + NADP(+) = (6R)-5,10-methenyltetrahydrofolate + NADPH. The catalysed reaction is (6R)-5,10-methenyltetrahydrofolate + H2O = (6R)-10-formyltetrahydrofolate + H(+). The protein operates within one-carbon metabolism; tetrahydrofolate interconversion. Functionally, catalyzes the oxidation of 5,10-methylenetetrahydrofolate to 5,10-methenyltetrahydrofolate and then the hydrolysis of 5,10-methenyltetrahydrofolate to 10-formyltetrahydrofolate. In Synechococcus sp. (strain CC9311), this protein is Bifunctional protein FolD.